A 20-amino-acid chain; its full sequence is Manganese peroxidase H5 (20 aa).

Belongs to the peroxidase family. Ligninase subfamily.

The protein localises to the secreted. It catalyses the reaction 2 Mn(2+) + H2O2 + 2 H(+) = 2 Mn(3+) + 2 H2O. Its function is as follows. Catalyzes the oxidation of Mn(2+) to Mn(3+). The latter, acting as a diffusible redox mediator, is capable of oxidizing a variety of lignin compounds. This chain is Manganese peroxidase H5, found in Phanerodontia chrysosporium (White-rot fungus).